A 160-amino-acid polypeptide reads, in one-letter code: Phosphopantetheine adenylyltransferase (160 aa).

Threonine 10 is a binding site for substrate. ATP-binding positions include 10-11 (TF) and histidine 18. Lysine 42, leucine 74, and arginine 88 together coordinate substrate. Residues 89–91 (GLR), glutamate 99, and 124–130 (NSFISST) contribute to the ATP site.

The protein belongs to the bacterial CoaD family. As to quaternary structure, homohexamer. The cofactor is Mg(2+).

Its subcellular location is the cytoplasm. It catalyses the reaction (R)-4'-phosphopantetheine + ATP + H(+) = 3'-dephospho-CoA + diphosphate. It functions in the pathway cofactor biosynthesis; coenzyme A biosynthesis; CoA from (R)-pantothenate: step 4/5. Its function is as follows. Reversibly transfers an adenylyl group from ATP to 4'-phosphopantetheine, yielding dephospho-CoA (dPCoA) and pyrophosphate. The polypeptide is Phosphopantetheine adenylyltransferase (Aeromonas salmonicida (strain A449)).